A 214-amino-acid chain; its full sequence is tRNA (guanine-N(7)-)-methyltransferase (214 aa).

Residues Glu-44, Glu-69, Asp-96, and Asp-118 each contribute to the S-adenosyl-L-methionine site. The active site involves Asp-118. Residues Lys-122, Asp-154, and 191–194 (TEYE) each bind substrate.

It belongs to the class I-like SAM-binding methyltransferase superfamily. TrmB family.

The enzyme catalyses guanosine(46) in tRNA + S-adenosyl-L-methionine = N(7)-methylguanosine(46) in tRNA + S-adenosyl-L-homocysteine. It functions in the pathway tRNA modification; N(7)-methylguanine-tRNA biosynthesis. Functionally, catalyzes the formation of N(7)-methylguanine at position 46 (m7G46) in tRNA. This chain is tRNA (guanine-N(7)-)-methyltransferase, found in Listeria monocytogenes serotype 4a (strain HCC23).